The primary structure comprises 286 residues: Formamidopyrimidine-DNA glycosylase (286 aa).

The active-site Schiff-base intermediate with DNA is the P2. The Proton donor role is filled by E3. The active-site Proton donor; for beta-elimination activity is the K61. Residues H96, R115, and K161 each contribute to the DNA site. The FPG-type zinc finger occupies E247–R281. R271 serves as the catalytic Proton donor; for delta-elimination activity.

It belongs to the FPG family. As to quaternary structure, monomer. Zn(2+) serves as cofactor.

The catalysed reaction is Hydrolysis of DNA containing ring-opened 7-methylguanine residues, releasing 2,6-diamino-4-hydroxy-5-(N-methyl)formamidopyrimidine.. It carries out the reaction 2'-deoxyribonucleotide-(2'-deoxyribose 5'-phosphate)-2'-deoxyribonucleotide-DNA = a 3'-end 2'-deoxyribonucleotide-(2,3-dehydro-2,3-deoxyribose 5'-phosphate)-DNA + a 5'-end 5'-phospho-2'-deoxyribonucleoside-DNA + H(+). In terms of biological role, involved in base excision repair of DNA damaged by oxidation or by mutagenic agents. Acts as a DNA glycosylase that recognizes and removes damaged bases. Has a preference for oxidized purines, such as 7,8-dihydro-8-oxoguanine (8-oxoG). Has AP (apurinic/apyrimidinic) lyase activity and introduces nicks in the DNA strand. Cleaves the DNA backbone by beta-delta elimination to generate a single-strand break at the site of the removed base with both 3'- and 5'-phosphates. This chain is Formamidopyrimidine-DNA glycosylase, found in Mycobacteroides abscessus (strain ATCC 19977 / DSM 44196 / CCUG 20993 / CIP 104536 / JCM 13569 / NCTC 13031 / TMC 1543 / L948) (Mycobacterium abscessus).